A 305-amino-acid chain; its full sequence is Coiled-coil domain-containing protein 69 (305 aa).

A lipid anchor (N-myristoyl glycine) is attached at glycine 2. The segment at 13-41 is disordered; sequence LRKKKRQKAHQEGLTSKELNDLNAKSQEP. Coiled coils occupy residues 42 to 167 and 216 to 278; these read NELL…SVLS and MERN…KEQN.

This sequence belongs to the CCDC69 family.

Its subcellular location is the cytoplasm. The protein resides in the cytoskeleton. The protein localises to the spindle. It localises to the midbody. In terms of biological role, may act as a scaffold to regulate the recruitment and assembly of spindle midzone components. The sequence is that of Coiled-coil domain-containing protein 69 (ccdc69) from Xenopus tropicalis (Western clawed frog).